Consider the following 232-residue polypeptide: Ubiquinone biosynthesis O-methyltransferase (232 aa).

S-adenosyl-L-methionine-binding residues include Arg36, Gly55, Asp76, and Leu120.

The protein belongs to the methyltransferase superfamily. UbiG/COQ3 family.

It carries out the reaction a 3-demethylubiquinol + S-adenosyl-L-methionine = a ubiquinol + S-adenosyl-L-homocysteine + H(+). The enzyme catalyses a 3-(all-trans-polyprenyl)benzene-1,2-diol + S-adenosyl-L-methionine = a 2-methoxy-6-(all-trans-polyprenyl)phenol + S-adenosyl-L-homocysteine + H(+). Its pathway is cofactor biosynthesis; ubiquinone biosynthesis. Functionally, O-methyltransferase that catalyzes the 2 O-methylation steps in the ubiquinone biosynthetic pathway. The polypeptide is Ubiquinone biosynthesis O-methyltransferase (Stutzerimonas stutzeri (strain A1501) (Pseudomonas stutzeri)).